The primary structure comprises 1127 residues: Disease resistance protein RPS6 (1127 aa).

N-acetylmethionine is present on Met1. Residues 12–176 (WSYHVFPSFS…EIANDILGKM (165 aa)) enclose the TIR domain. Glu87 is a catalytic residue. The 262-residue stretch at 191 to 452 (EDHITKMSSL…HIACIFNGEK (262 aa)) folds into the NB-ARC domain. 11 LRR repeats span residues 197-221 (MSSLLHLESEEVRMVGIWGPSGIGK), 540-563 (IDETDELHIHESSFKGMHNLLFLK), 587-609 (PSRLRLLRFDRYPSKCLPSNFHP), 610-632 (ENLVKLQMQQSKLEKLWDGVHSL), 633-656 (AGLRNMDLRGSRNLKEIPDLSMAT), 658-679 (LETLKLSSCSSLVELPSSIQYL), 680-704 (NKLNDLDMSYCDHLETIPSGVNLKS), 766-790 (SPTLTRLTFSNNPSFVEVPSSIQNL), 791-813 (YQLEHLEIMNCRNLVTLPTGINL), 814-834 (DSLISLDLSHCSQLKTFPDIS), and 835-857 (TNISDLNLSYTAIEEVPLSIEKL).

As to quaternary structure, interacts with EDS1. In terms of tissue distribution, ubiquitous.

The catalysed reaction is NAD(+) + H2O = ADP-D-ribose + nicotinamide + H(+). In terms of biological role, disease resistance (R) protein that specifically recognizes the hopA1 type III effector avirulence protein from Pseudomonas syringae. Resistance proteins guard the plant against pathogens that contain an appropriate avirulence protein via an indirect interaction with this avirulence protein. That triggers a defense system including the hypersensitive response, which restricts the pathogen growth. This chain is Disease resistance protein RPS6 (RPS6), found in Arabidopsis thaliana (Mouse-ear cress).